A 132-amino-acid chain; its full sequence is Protein NrdI (132 aa).

The protein belongs to the NrdI family.

Its function is as follows. Probably involved in ribonucleotide reductase function. The polypeptide is Protein NrdI (Bartonella henselae (strain ATCC 49882 / DSM 28221 / CCUG 30454 / Houston 1) (Rochalimaea henselae)).